Reading from the N-terminus, the 395-residue chain is Testis-expressed protein 44 (395 aa).

Disordered regions lie at residues 1–32 (MALP…PLTA), 46–100 (WQDI…LQVS), 133–215 (KMSQ…SDES), and 235–258 (FPPP…GRRP). Residues 53-65 (SFKTATPRAISTS) are compositionally biased toward polar residues. Low complexity predominate over residues 87–98 (PLLPSQNPSPLQ). Over residues 192–207 (SAEEKAEHPKAPHPEA) the composition is skewed to basic and acidic residues. Ser-333 is modified (phosphoserine).

As to expression, testis. Detected in germ cells at all stages of the seminiferous epithelium, strong expression in elongating spermatids (at protein level).

It localises to the cytoplasm. In Homo sapiens (Human), this protein is Testis-expressed protein 44.